Consider the following 243-residue polypeptide: Tryptophan synthase alpha chain (243 aa).

Active-site proton acceptor residues include Glu-31 and Asp-42.

Belongs to the TrpA family. Tetramer of two alpha and two beta chains.

The catalysed reaction is (1S,2R)-1-C-(indol-3-yl)glycerol 3-phosphate + L-serine = D-glyceraldehyde 3-phosphate + L-tryptophan + H2O. Its pathway is amino-acid biosynthesis; L-tryptophan biosynthesis; L-tryptophan from chorismate: step 5/5. In terms of biological role, the alpha subunit is responsible for the aldol cleavage of indoleglycerol phosphate to indole and glyceraldehyde 3-phosphate. This Staphylococcus haemolyticus (strain JCSC1435) protein is Tryptophan synthase alpha chain.